Here is a 398-residue protein sequence, read N- to C-terminus: Elongation factor Tu (398 aa).

Positions 10 to 207 (KPHVNIGTIG…TVDEYIPEPE (198 aa)) constitute a tr-type G domain. Residues 19–26 (GHVDHGKT) form a G1 region. 19–26 (GHVDHGKT) is a GTP binding site. Threonine 26 lines the Mg(2+) pocket. Residues 63 to 67 (GITIN) are G2. A G3 region spans residues 84–87 (DAPG). GTP contacts are provided by residues 84-88 (DAPGH) and 139-142 (NKVD). Residues 139-142 (NKVD) are G4. Positions 177 to 179 (SAL) are G5.

Belongs to the TRAFAC class translation factor GTPase superfamily. Classic translation factor GTPase family. EF-Tu/EF-1A subfamily. In terms of assembly, monomer.

Its subcellular location is the cytoplasm. It carries out the reaction GTP + H2O = GDP + phosphate + H(+). GTP hydrolase that promotes the GTP-dependent binding of aminoacyl-tRNA to the A-site of ribosomes during protein biosynthesis. This is Elongation factor Tu from Streptococcus agalactiae serotype Ia (strain ATCC 27591 / A909 / CDC SS700).